The following is a 335-amino-acid chain: Adenine deaminase (335 aa).

Zn(2+) is bound by residues H14, H16, and H194. The active-site Proton donor is E197. Residue D275 participates in Zn(2+) binding. D276 lines the substrate pocket.

Belongs to the metallo-dependent hydrolases superfamily. Adenosine and AMP deaminases family. Adenine deaminase type 2 subfamily. Zn(2+) is required as a cofactor.

The catalysed reaction is adenine + H2O + H(+) = hypoxanthine + NH4(+). Catalyzes the hydrolytic deamination of adenine to hypoxanthine. Plays an important role in the purine salvage pathway and in nitrogen catabolism. The chain is Adenine deaminase from Chlorobium phaeobacteroides (strain BS1).